Consider the following 886-residue polypeptide: Protein translocase subunit SecA (886 aa).

ATP is bound by residues Gln85, 103–107, and Asp492; that span reads GEGKT. Residues 841–864 show a composition bias toward basic and acidic residues; it reads RVVENRYAEEGPKQPARRENKVGR. The disordered stretch occupies residues 841–866; it reads RVVENRYAEEGPKQPARRENKVGRND. The Zn(2+) site is built by Cys868, Cys870, Cys879, and Cys880.

This sequence belongs to the SecA family. As to quaternary structure, monomer and homodimer. Part of the essential Sec protein translocation apparatus which comprises SecA, SecYEG and auxiliary proteins SecDF. Other proteins may also be involved. The cofactor is Zn(2+).

The protein localises to the cell membrane. It localises to the cytoplasm. It catalyses the reaction ATP + H2O + cellular proteinSide 1 = ADP + phosphate + cellular proteinSide 2.. In terms of biological role, part of the Sec protein translocase complex. Interacts with the SecYEG preprotein conducting channel. Has a central role in coupling the hydrolysis of ATP to the transfer of proteins into and across the cell membrane, serving as an ATP-driven molecular motor driving the stepwise translocation of polypeptide chains across the membrane. The polypeptide is Protein translocase subunit SecA (Pelotomaculum thermopropionicum (strain DSM 13744 / JCM 10971 / SI)).